A 122-amino-acid chain; its full sequence is Small ribosomal subunit protein uS13 (122 aa).

Positions 99-122 are disordered; that stretch reads RGQRTHTNARTRKGPAKAIAGKKK.

This sequence belongs to the universal ribosomal protein uS13 family. As to quaternary structure, part of the 30S ribosomal subunit. Forms a loose heterodimer with protein S19. Forms two bridges to the 50S subunit in the 70S ribosome.

Functionally, located at the top of the head of the 30S subunit, it contacts several helices of the 16S rRNA. In the 70S ribosome it contacts the 23S rRNA (bridge B1a) and protein L5 of the 50S subunit (bridge B1b), connecting the 2 subunits; these bridges are implicated in subunit movement. Contacts the tRNAs in the A and P-sites. This is Small ribosomal subunit protein uS13 from Rhodopseudomonas palustris (strain BisA53).